The sequence spans 473 residues: Photosystem II CP43 reaction center protein (473 aa).

The propeptide occupies 1–14 (MKILYSQRRFYHVE). Position 15 is an N-acetylthreonine (T15). Position 15 is a phosphothreonine (T15). 5 helical membrane passes run 69–93 (LFEVAHFVPEKPMYEQGLILLPHLA), 134–155 (LIGPETLEESFPFFGYVWKDKN), 178–200 (KALYFGGIYDTWAPGGGDVRKIT), 255–275 (KPFAWARRALVWSGEAYLSYS), and 291–312 (WFNNTAYPSEFYGPTGPEASQA). [CaMn4O5] cluster is bound at residue E367. Residues 447–471 (RARAAAAGFEKGIDRDFEPVLSMTP) traverse the membrane as a helical segment.

It belongs to the PsbB/PsbC family. PsbC subfamily. As to quaternary structure, PSII is composed of 1 copy each of membrane proteins PsbA, PsbB, PsbC, PsbD, PsbE, PsbF, PsbH, PsbI, PsbJ, PsbK, PsbL, PsbM, PsbT, PsbX, PsbY, PsbZ, Psb30/Ycf12, at least 3 peripheral proteins of the oxygen-evolving complex and a large number of cofactors. It forms dimeric complexes. The cofactor is Binds multiple chlorophylls and provides some of the ligands for the Ca-4Mn-5O cluster of the oxygen-evolving complex. It may also provide a ligand for a Cl- that is required for oxygen evolution. PSII binds additional chlorophylls, carotenoids and specific lipids..

It is found in the plastid. The protein resides in the chloroplast thylakoid membrane. One of the components of the core complex of photosystem II (PSII). It binds chlorophyll and helps catalyze the primary light-induced photochemical processes of PSII. PSII is a light-driven water:plastoquinone oxidoreductase, using light energy to abstract electrons from H(2)O, generating O(2) and a proton gradient subsequently used for ATP formation. This chain is Photosystem II CP43 reaction center protein, found in Physcomitrium patens (Spreading-leaved earth moss).